A 517-amino-acid polypeptide reads, in one-letter code: Quinol oxidase subunit 1 (517 aa).

A run of 12 helical transmembrane segments spans residues 19-39 (VVWL…IAAM), 64-84 (IHGW…VIGF), 98-118 (QMAI…AGSP), 150-170 (MAYL…VTLI), 185-205 (IFAA…PALA), 226-246 (WAIL…FPLF), 271-291 (IYLL…TWPL), 303-323 (TLIL…TIFT), 333-353 (VGMG…QALV), 369-389 (VVGH…TTVF), 412-432 (IGMI…SVAG), and 460-480 (IGIP…LAYA). H65 lines the Fe(II)-heme a pocket. Cu cation contacts are provided by H235, Y239, H284, and H285. Residues 235-239 (HPVVY) constitute a cross-link (1'-histidyl-3'-tyrosine (His-Tyr)). H372 contacts heme a3. H374 lines the Fe(II)-heme a pocket.

It belongs to the heme-copper respiratory oxidase family.

The protein localises to the cell membrane. It carries out the reaction 2 a quinol + O2 = 2 a quinone + 2 H2O. Catalyzes the reduction of oxygen to water. In terms of biological role, subunits I, II and III form the functional core of the enzyme complex. Electrons originating in caldariella quinol are transferred to the binuclear center formed by heme A3 and Cu(B). Functionally, subunit I binds heme a and the bimetallic center. This is Quinol oxidase subunit 1 (soxB) from Sulfolobus acidocaldarius (strain ATCC 33909 / DSM 639 / JCM 8929 / NBRC 15157 / NCIMB 11770).